A 120-amino-acid chain; its full sequence is Holo-[acyl-carrier-protein] synthase (120 aa).

Mg(2+)-binding residues include Asp8 and Glu58.

Belongs to the P-Pant transferase superfamily. AcpS family. Mg(2+) is required as a cofactor.

It localises to the cytoplasm. It catalyses the reaction apo-[ACP] + CoA = holo-[ACP] + adenosine 3',5'-bisphosphate + H(+). Its function is as follows. Transfers the 4'-phosphopantetheine moiety from coenzyme A to a Ser of acyl-carrier-protein. This Streptococcus pneumoniae (strain Hungary19A-6) protein is Holo-[acyl-carrier-protein] synthase.